The chain runs to 192 residues: Ribose 1,5-bisphosphate phosphokinase PhnN (192 aa).

15-22 (GPSGAGKD) contributes to the ATP binding site.

This sequence belongs to the ribose 1,5-bisphosphokinase family.

The enzyme catalyses alpha-D-ribose 1,5-bisphosphate + ATP = 5-phospho-alpha-D-ribose 1-diphosphate + ADP. Its pathway is metabolic intermediate biosynthesis; 5-phospho-alpha-D-ribose 1-diphosphate biosynthesis; 5-phospho-alpha-D-ribose 1-diphosphate from D-ribose 5-phosphate (route II): step 3/3. In terms of biological role, catalyzes the phosphorylation of ribose 1,5-bisphosphate to 5-phospho-D-ribosyl alpha-1-diphosphate (PRPP). The protein is Ribose 1,5-bisphosphate phosphokinase PhnN of Brucella abortus biovar 1 (strain 9-941).